A 172-amino-acid chain; its full sequence is AIG2-like protein B (172 aa).

15-20 is a substrate binding site; that stretch reads YGSFQE. The active-site Proton acceptor is the glutamate 83. The span at 146–165 shows a compositional bias: basic and acidic residues; that stretch reads KRNPQGKGRDDFSNVLKEED. Positions 146–172 are disordered; the sequence is KRNPQGKGRDDFSNVLKEEDPANAPSS.

It belongs to the gamma-glutamylcyclotransferase family. Expressed in flowerss, leaves, stems, seeds and roots.

Its subcellular location is the cell membrane. Putative gamma-glutamylcyclotransferase. This is AIG2-like protein B from Arabidopsis thaliana (Mouse-ear cress).